The sequence spans 949 residues: Glycine dehydrogenase (decarboxylating) (949 aa).

The residue at position 702 (lysine 702) is an N6-(pyridoxal phosphate)lysine.

The protein belongs to the GcvP family. As to quaternary structure, the glycine cleavage system is composed of four proteins: P, T, L and H. Pyridoxal 5'-phosphate is required as a cofactor.

It catalyses the reaction N(6)-[(R)-lipoyl]-L-lysyl-[glycine-cleavage complex H protein] + glycine + H(+) = N(6)-[(R)-S(8)-aminomethyldihydrolipoyl]-L-lysyl-[glycine-cleavage complex H protein] + CO2. The glycine cleavage system catalyzes the degradation of glycine. The P protein binds the alpha-amino group of glycine through its pyridoxal phosphate cofactor; CO(2) is released and the remaining methylamine moiety is then transferred to the lipoamide cofactor of the H protein. The polypeptide is Glycine dehydrogenase (decarboxylating) (Rhodococcoides fascians (Rhodococcus fascians)).